A 300-amino-acid polypeptide reads, in one-letter code: MESVLDAFDQYLALERGRSDHTRRAYLGDLRSLFAFCNERTPGADLGSLTLPVLRAWLSAQAAAGTARTTLARRTSAVKTFTAWAVRRGLMASDPATRLQMPKARRTLPAVLRQDQARDALDAANSGAQQGDPLALRDRLIVEMLYATGIRVSELCGLDIDDVDTSRRLLRVLGKGDKQRTVPFGEPAEQALRAWLTSGRPALATAESGPALLLGARGRRLDPRQARTVVHETVGAVAGAPDIGPHGLRHSAATHLLEGGADLRIVQELLGHSTLATTQLYTHVTVARLRAVHDQAHPRA.

A Core-binding (CB) domain is found at 1-86 (MESVLDAFDQ…AVKTFTAWAV (86 aa)). One can recognise a Tyr recombinase domain in the interval 107–294 (TLPAVLRQDQ…TVARLRAVHD (188 aa)). Active-site residues include arginine 151, lysine 175, histidine 246, arginine 249, and histidine 272. The active-site O-(3'-phospho-DNA)-tyrosine intermediate is tyrosine 281.

The protein belongs to the 'phage' integrase family. XerC subfamily. As to quaternary structure, forms a cyclic heterotetrameric complex composed of two molecules of XerC and two molecules of XerD.

The protein localises to the cytoplasm. Its function is as follows. Site-specific tyrosine recombinase, which acts by catalyzing the cutting and rejoining of the recombining DNA molecules. The XerC-XerD complex is essential to convert dimers of the bacterial chromosome into monomers to permit their segregation at cell division. It also contributes to the segregational stability of plasmids. The protein is Tyrosine recombinase XerC of Mycobacterium sp. (strain KMS).